Here is a 131-residue protein sequence, read N- to C-terminus: Small ribosomal subunit protein uS8 (131 aa).

This sequence belongs to the universal ribosomal protein uS8 family. As to quaternary structure, part of the 30S ribosomal subunit. Contacts proteins S5 and S12.

Its function is as follows. One of the primary rRNA binding proteins, it binds directly to 16S rRNA central domain where it helps coordinate assembly of the platform of the 30S subunit. The sequence is that of Small ribosomal subunit protein uS8 from Ralstonia pickettii (strain 12J).